The sequence spans 222 residues: MGVAGPWVLRVGLGLGAFALLLQGLRGWLACKRYEFQPAEIAELARHHAGLDHELAFSKIIVELRKKHPGHILPDEDLQWVFVNAGGWMGSMCLLHASLTEYVLLFGTAIDTGGHSGRYWAEIYDTIISGTFRQWKEGTTRSEIYYPGDTIVHQAGEATSVQWSAGTWMVEYGRGFVPSTLAFALADTLFSTQDFITLFYTLRAYTKGLLLEASAFFSTLGC.

Over M1–W7 the chain is Lumenal. Residues V8–L29 form a helical membrane-spanning segment. At A30–C222 the chain is on the cytoplasmic side. The tract at residues S98–L105 is important for ligand-binding. A C-terminal hydrophobic region region spans residues F176 to C222.

The protein belongs to the ERG2 family. Homotrimer.

The protein localises to the nucleus inner membrane. The protein resides in the nucleus outer membrane. Its subcellular location is the nucleus envelope. It is found in the cytoplasmic vesicle. It localises to the endoplasmic reticulum membrane. The protein localises to the membrane. Functionally, may function in lipid transport from the endoplasmic reticulum and be involved in a wide array of cellular functions probably through regulation of the biogenesis of lipid microdomains at the plasma membrane. May regulate calcium efflux at the endoplasmic reticulum. This Gallus gallus (Chicken) protein is Sigma non-opioid intracellular receptor 1 (SIGMAR1).